The primary structure comprises 31 residues: PTEN upstream open reading frame MP31 (31 aa).

As to quaternary structure, interacts with lactate dehydrogenases LDHA and LDHB; interaction with mitochondrial LDH leads to inhibition of lactate dehydrogenase activity, preventing conversion of lactate to pyruvate. As to expression, expressed in brain (at protein level). Expressed at lower levels in glioblastomas than in normal brain tissue (at protein level).

The protein localises to the mitochondrion. Inhibits lactate dehydrogenase (LDH)-mediated conversion of lactate to pyruvate in mitochondria by competing with mitochondrial LDH for binding to NAD(+). Also inhibits cellular lactate utilization. This Homo sapiens (Human) protein is PTEN upstream open reading frame MP31.